Reading from the N-terminus, the 336-residue chain is CMP-sialic acid transporter (336 aa).

The Cytoplasmic portion of the chain corresponds to 1-9 (MAQARENVS). A helical transmembrane segment spans residues 10–30 (LFFKLYCLAVMTLVAAAYTVA). Topologically, residues 31 to 45 (LRYTRTTAKELYFST) are lumenal. The helical transmembrane segment at 46–64 (TAVCVTEVIKLLISVGLLA) threads the bilayer. Lys55 contributes to the CMP-N-acetyl-beta-neuraminate binding site. Topologically, residues 65–87 (KETGSLGRFKASLSENVLGSPKE) are cytoplasmic. A helical membrane pass occupies residues 88–108 (LMKLSVPSLVYAVQNNMAFLA). Residue 101-102 (QN) participates in CMP-N-acetyl-beta-neuraminate binding. Residues 109 to 114 (LSNLDA) lie on the Lumenal side of the membrane. The helical transmembrane segment at 115–135 (AVYQVTYQLKIPCTALCTVLM) threads the bilayer. A CMP-N-acetyl-beta-neuraminate-binding site is contributed by 117–124 (YQVTYQLK). Topologically, residues 136–141 (LNRTLS) are cytoplasmic. The chain crosses the membrane as a helical span at residues 142–160 (KLQWVSVFMLCGGVILVQW). Residues 161-175 (KPAQATKVVVEQSPL) lie on the Lumenal side of the membrane. The chain crosses the membrane as a helical span at residues 176 to 196 (LGFGAIAIAVLCSGFAGVYFE). Ser188 lines the CMP-N-acetyl-beta-neuraminate pocket. Residues 197-209 (KVLKSSDTSLWVR) lie on the Cytoplasmic side of the membrane. 210 to 214 (NIQMY) serves as a coordination point for CMP-N-acetyl-beta-neuraminate. A helical membrane pass occupies residues 210–228 (NIQMYLSGIVVTLVGTYLS). Over 229-243 (DGAEIKEKGFFYGYT) the chain is Lumenal. Residues 244-262 (YYVWFVIFLASVGGLYTSV) form a helical membrane-spanning segment. At 263-269 (VVKYTDN) the chain is on the cytoplasmic side. A helical membrane pass occupies residues 270 to 288 (IMKGFSAAAAIVLSTIASV). Lys272 contacts CMP-N-acetyl-beta-neuraminate. Residues 289 to 296 (MLFGLQIT) are Lumenal-facing. A helical membrane pass occupies residues 297-315 (LSFAMGALLVCISIYLYGL). Residues 316–336 (PRQDTTCIQQEATSKERVIGV) lie on the Cytoplasmic side of the membrane. Residues 316 to 336 (PRQDTTCIQQEATSKERVIGV) form a disordered region.

This sequence belongs to the nucleotide-sugar transporter family. SLC35A subfamily. Monomer.

It localises to the golgi apparatus membrane. The enzyme catalyses CMP-N-acetyl-beta-neuraminate(in) + CMP(out) = CMP-N-acetyl-beta-neuraminate(out) + CMP(in). It catalyses the reaction CMP-N-acetyl-beta-neuraminate(in) + AMP(out) = CMP-N-acetyl-beta-neuraminate(out) + AMP(in). It carries out the reaction CDP-L-ribitol(in) + CDP(out) = CDP-L-ribitol(out) + CDP(in). The catalysed reaction is UMP(out) + CMP-N-acetyl-beta-neuraminate(in) = UMP(in) + CMP-N-acetyl-beta-neuraminate(out). Its function is as follows. Transports CMP-sialic acid from the cytosol into the Golgi apparatus, functioning as an antiporter that exchanges CMP-sialic acid for CMP. Binds both CMP-sialic acid and free CMP, but has higher affinity for free CMP. Also able to exchange CMP-sialic acid for AMP and UMP. Also mediates the transport of CDP-ribitol. This chain is CMP-sialic acid transporter (SLC35A1), found in Cricetulus griseus (Chinese hamster).